Reading from the N-terminus, the 624-residue chain is MPATPSNVPEPSRTDPALIRNFCIIAHIDHGKSTLADRMLQLTGVVDQRQMRAQYLDRMDIERERGITIKSQAVRLPWAPTEGEDKGLTHVLNMIDTPGHVDFTYEVSRSLAACEGTVLLVDAAQGIEAQTLANLYLAMENDLTIVPVLNKIDLPAAQPEKFSEELANLIGCQPEDVLKVSAKTGVGVDALLDRVVRDVPAPVGVADAPARAMIFDSVYDSYRGVVTYVRVVDGQLNKRERIRMMSTGATHELLEIGVSSPEMTPADGIGVGEVGYIITGVKDVRQSKVGDTITSLQNGATEALGGYKDPKPMVFSGLYPLDGSDYPDLREALDKLQLNDAALVYEPETSAALGFGFRVGFLGLLHLDVVRERLEREFGLDLIATAPNVVYRVEMEDGTEHVVTNPSEFPEGKIDKVHEPVVRATVLAPSEFIGAIMELCQGRRGTLLGMDYLSEDRVEIRYTLPLAEIVFDFFDQLKSKTRGYASLDYEPTGEQTANLVKVDILLHGDKVDAFSAVTHKDKAYAYGVRLVAKLQKLIPRQNFEVPIQAAIGARVIARETVRAIRKDVLAKCYGGDISRKRKLLEKQKEGKKRMKMVGNVEVPQDAFISVLSTDESAGEGKGKK.

The tr-type G domain occupies 17-203; sequence ALIRNFCIIA…RVVRDVPAPV (187 aa). Residues 29 to 34 and 150 to 153 each bind GTP; these read DHGKST and NKID.

Belongs to the TRAFAC class translation factor GTPase superfamily. Classic translation factor GTPase family. LepA subfamily.

Its subcellular location is the cell membrane. The catalysed reaction is GTP + H2O = GDP + phosphate + H(+). In terms of biological role, required for accurate and efficient protein synthesis under certain stress conditions. May act as a fidelity factor of the translation reaction, by catalyzing a one-codon backward translocation of tRNAs on improperly translocated ribosomes. Back-translocation proceeds from a post-translocation (POST) complex to a pre-translocation (PRE) complex, thus giving elongation factor G a second chance to translocate the tRNAs correctly. Binds to ribosomes in a GTP-dependent manner. The protein is Elongation factor 4 of Streptomyces griseus subsp. griseus (strain JCM 4626 / CBS 651.72 / NBRC 13350 / KCC S-0626 / ISP 5235).